The primary structure comprises 226 residues: ATP synthase subunit a (226 aa).

A run of 6 helical transmembrane segments spans residues 18 to 38 (FITGFFVVLTAVLMFFISLGA), 79 to 99 (LAGTIALYVFFSNMIGIIPGF), 105 to 125 (SWSFTLVLALIVFFYYHFEGI), 134 to 154 (FAHFAGPVKWLAPFMFPIEII), 179 to 199 (LIMLLLVPWAVPVAPFMVLFF), and 201 to 221 (GILQAFVFMILTYVYLAGAVL).

This sequence belongs to the ATPase A chain family. In terms of assembly, F-type ATPases have 2 components, CF(1) - the catalytic core - and CF(0) - the membrane proton channel. CF(1) has five subunits: alpha(3), beta(3), gamma(1), delta(1), epsilon(1). CF(0) has three main subunits: a(1), b(2) and c(9-12). The alpha and beta chains form an alternating ring which encloses part of the gamma chain. CF(1) is attached to CF(0) by a central stalk formed by the gamma and epsilon chains, while a peripheral stalk is formed by the delta and b chains.

It localises to the cell inner membrane. Key component of the proton channel; it plays a direct role in the translocation of protons across the membrane. The polypeptide is ATP synthase subunit a (Helicobacter pylori (strain J99 / ATCC 700824) (Campylobacter pylori J99)).